A 532-amino-acid polypeptide reads, in one-letter code: MPAARVEYIAPWWVVWLHSVPHLGLRLQRVDSTFSPGDETYQESLLFLGVLAAIGLGLNLIFLTVYLVCTCCCRRDHTVQTKQQESCCVTWTAVVAGLLCCAAVGVGFYGNSETNDGMHQLIYSLDNANHTFSGMDELVSANTQRMKVDLEQHLARLSEIIAARGDYIQTLKFMQQMAGNVVSQLSGLPVWREVTTQLTKLSHQTAYVEYYRWLSYLLLFILDLVICLVTCLGLARRSKCLLASMLCCGILTLILSWASLAADAAAAVGTSDFCMAPDIYILNNTGSQINSEVTRYYLHCSQSLISPFQQSLTTFQRSLTTMQIQVGGLLQFAVPLFPTAEKDLLGIQLLLNNSEISLHQLTAMLDCRGLHKDYLDALTGICYDGIEGLLFLGLFSLLAALAFSTLTCAGPRAWKYFINRDRDYDDIDDDDPFNPQARRIAAHNPTRGQLHSFCSYSSGLGSQCSLQPPSQTISNAPVSEYMNQAILFGGNPRYENVPLIGRGSPPPTYSPSMRPTYMSVADEHLRHYEFPS.

Over 1-44 the chain is Extracellular; sequence MPAARVEYIAPWWVVWLHSVPHLGLRLQRVDSTFSPGDETYQES. A helical membrane pass occupies residues 45-65; the sequence is LLFLGVLAAIGLGLNLIFLTV. At 66–87 the chain is on the cytoplasmic side; the sequence is YLVCTCCCRRDHTVQTKQQESC. Residues 88-108 form a helical membrane-spanning segment; the sequence is CVTWTAVVAGLLCCAAVGVGF. The Extracellular segment spans residues 109–213; that stretch reads YGNSETNDGM…QTAYVEYYRW (105 aa). Positions 113 and 116 each coordinate Ca(2+). Asparagine 129 carries an N-linked (GlcNAc...) asparagine glycan. The short motif at 164–166 is the RGD element; it reads RGD. Threonine 199 is modified (phosphothreonine). Residues 214–234 form a helical membrane-spanning segment; that stretch reads LSYLLLFILDLVICLVTCLGL. Residues 235–240 lie on the Cytoplasmic side of the membrane; that stretch reads ARRSKC. The helical transmembrane segment at 241 to 261 threads the bilayer; it reads LLASMLCCGILTLILSWASLA. Residues 262–385 lie on the Extracellular side of the membrane; the sequence is ADAAAAVGTS…DALTGICYDG (124 aa). Cystine bridges form between cysteine 274–cysteine 382 and cysteine 300–cysteine 367. 2 N-linked (GlcNAc...) asparagine glycosylation sites follow: asparagine 283 and asparagine 352. The chain crosses the membrane as a helical span at residues 386-406; that stretch reads IEGLLFLGLFSLLAALAFSTL. Residues 407-532 lie on the Cytoplasmic side of the membrane; that stretch reads TCAGPRAWKY…EHLRHYEFPS (126 aa). Serine 504 carries the phosphoserine modification. A PY-motif; mediates interaction with NEDD4L motif is present at residues 506-509; the sequence is PPTY.

It belongs to the tweety family. As to quaternary structure, forms cis-homodimers in the presence of Ca(+2) and forms monomers and trans-dimers in the absence of Ca(2+). Interacts with NEDD4L. In terms of processing, ubiquitinated by NEDD4L, leading to its proteasomal degradation.

The protein localises to the cell membrane. The enzyme catalyses chloride(in) = chloride(out). The catalysed reaction is L-glutamate(out) = L-glutamate(in). With respect to regulation, inhibited by (4-[(2-butyl-6,7-dichloro-2- cyclopentyl-2,3-dihydro-1-oxo-1H-inden-5-yl)oxy]butanoic acid). Calcium-independent, swelling-dependent volume-regulated anion channel (VRAC-swell) which plays a pivotal role in the process of regulatory volume decrease (RVD) in the brain through the efflux of anions like chloride and organic osmolytes like glutamate. Probable large-conductance Ca(2+)-activated chloride channel. The polypeptide is Protein tweety homolog 2 (Ttyh2) (Mus musculus (Mouse)).